The chain runs to 453 residues: Neuraminidase (453 aa).

At 1–6 (MNPNQK) the chain is on the intravirion side. Residues 7-27 (IITIGSICMVVGIISLILQIG) traverse the membrane as a helical segment. The interval 11 to 33 (GSICMVVGIISLILQIGNIISIW) is involved in apical transport and lipid raft association. Residues 28-453 (NIISIWISHS…GAELPFTIDK (426 aa)) lie on the Virion surface side of the membrane. The segment at 36–74 (HSIQTGNQNHTGICNQGIITYNVVAGQDSTSVILTGNSS) is hypervariable stalk region. 2 N-linked (GlcNAc...) asparagine; by host glycosylation sites follow: Asn-44 and Asn-72. The head of neuraminidase stretch occupies residues 75 to 453 (LCPIRGWAIH…GAELPFTIDK (379 aa)). Cystine bridges form between Cys-76–Cys-401, Cys-108–Cys-113, Cys-168–Cys-215, Cys-217–Cys-222, Cys-263–Cys-276, Cys-265–Cys-274, Cys-302–Cys-319, and Cys-405–Cys-430. Residue Arg-102 participates in substrate binding. An N-linked (GlcNAc...) asparagine; by host glycan is attached at Asn-130. The Proton donor/acceptor role is filled by Asp-135. Arg-136 is a substrate binding site. N-linked (GlcNAc...) asparagine; by host glycosylation is present at Asn-219. 261–262 (EE) lines the substrate pocket. Residue Arg-277 participates in substrate binding. The Ca(2+) site is built by Asp-278, Gly-282, Asp-308, and Asn-328. Residue Arg-352 coordinates substrate. Catalysis depends on Tyr-386, which acts as the Nucleophile.

The protein belongs to the glycosyl hydrolase 34 family. As to quaternary structure, homotetramer. Requires Ca(2+) as cofactor. Post-translationally, N-glycosylated.

The protein localises to the virion membrane. It localises to the host apical cell membrane. It catalyses the reaction Hydrolysis of alpha-(2-&gt;3)-, alpha-(2-&gt;6)-, alpha-(2-&gt;8)- glycosidic linkages of terminal sialic acid residues in oligosaccharides, glycoproteins, glycolipids, colominic acid and synthetic substrates.. With respect to regulation, inhibited by the neuraminidase inhibitors zanamivir (Relenza) and oseltamivir (Tamiflu). These drugs interfere with the release of progeny virus from infected cells and are effective against all influenza strains. Resistance to neuraminidase inhibitors is quite rare. Unlike other strains, A/WSN/33 neuraminidase binds and activates plasminogen into plasmin in the vicinity of HA so that activated plasmin cleaves HA rendering the virus infectious. Functionally, catalyzes the removal of terminal sialic acid residues from viral and cellular glycoconjugates. Cleaves off the terminal sialic acids on the glycosylated HA during virus budding to facilitate virus release. Additionally helps virus spread through the circulation by further removing sialic acids from the cell surface. These cleavages prevent self-aggregation and ensure the efficient spread of the progeny virus from cell to cell. Otherwise, infection would be limited to one round of replication. Described as a receptor-destroying enzyme because it cleaves a terminal sialic acid from the cellular receptors. May facilitate viral invasion of the upper airways by cleaving the sialic acid moieties on the mucin of the airway epithelial cells. Likely to plays a role in the budding process through its association with lipid rafts during intracellular transport. May additionally display a raft-association independent effect on budding. Plays a role in the determination of host range restriction on replication and virulence. Sialidase activity in late endosome/lysosome traffic seems to enhance virus replication. The sequence is that of Neuraminidase from Influenza A virus (strain A/Wilson-Smith/1933 H1N1) (Influenza A virus (strain A/WS/1933 H1N1)).